Reading from the N-terminus, the 306-residue chain is Methionyl-tRNA formyltransferase (306 aa).

105–108 (SLLP) provides a ligand contact to (6S)-5,6,7,8-tetrahydrofolate.

The protein belongs to the Fmt family.

It catalyses the reaction L-methionyl-tRNA(fMet) + (6R)-10-formyltetrahydrofolate = N-formyl-L-methionyl-tRNA(fMet) + (6S)-5,6,7,8-tetrahydrofolate + H(+). Functionally, attaches a formyl group to the free amino group of methionyl-tRNA(fMet). The formyl group appears to play a dual role in the initiator identity of N-formylmethionyl-tRNA by promoting its recognition by IF2 and preventing the misappropriation of this tRNA by the elongation apparatus. In Rubrobacter xylanophilus (strain DSM 9941 / JCM 11954 / NBRC 16129 / PRD-1), this protein is Methionyl-tRNA formyltransferase.